Reading from the N-terminus, the 163-residue chain is ATP synthase subunit b 1 (163 aa).

A helical transmembrane segment spans residues 5–25; the sequence is LDATFFAFVGLVLFLALVVYL.

Belongs to the ATPase B chain family. F-type ATPases have 2 components, F(1) - the catalytic core - and F(0) - the membrane proton channel. F(1) has five subunits: alpha(3), beta(3), gamma(1), delta(1), epsilon(1). F(0) has three main subunits: a(1), b(2) and c(10-14). The alpha and beta chains form an alternating ring which encloses part of the gamma chain. F(1) is attached to F(0) by a central stalk formed by the gamma and epsilon chains, while a peripheral stalk is formed by the delta and b chains.

It is found in the cell inner membrane. In terms of biological role, f(1)F(0) ATP synthase produces ATP from ADP in the presence of a proton or sodium gradient. F-type ATPases consist of two structural domains, F(1) containing the extramembraneous catalytic core and F(0) containing the membrane proton channel, linked together by a central stalk and a peripheral stalk. During catalysis, ATP synthesis in the catalytic domain of F(1) is coupled via a rotary mechanism of the central stalk subunits to proton translocation. Functionally, component of the F(0) channel, it forms part of the peripheral stalk, linking F(1) to F(0). The protein is ATP synthase subunit b 1 of Rhizobium etli (strain CIAT 652).